We begin with the raw amino-acid sequence, 328 residues long: tRNA-modifying protein YgfZ (328 aa).

Trp28 and Trp190 together coordinate folate.

It belongs to the tRNA-modifying YgfZ family.

It is found in the cytoplasm. Functionally, folate-binding protein involved in regulating the level of ATP-DnaA and in the modification of some tRNAs. It is probably a key factor in regulatory networks that act via tRNA modification, such as initiation of chromosomal replication. This is tRNA-modifying protein YgfZ from Sodalis glossinidius (strain morsitans).